The following is a 357-amino-acid chain: Protein-glutamate methylesterase/protein-glutamine glutaminase 1 (357 aa).

The 119-residue stretch at 7 to 125 (RAVIIDDSLL…QFDPEEIGNI (119 aa)) folds into the Response regulatory domain. Asp-58 bears the 4-aspartylphosphate mark. The 183-residue stretch at 162–344 (KKSPIQAICI…VEYIEPVTEI (183 aa)) folds into the CheB-type methylesterase domain. Active-site residues include Ser-174, His-201, and Asp-297.

Belongs to the CheB family. Post-translationally, phosphorylated by CheA. Phosphorylation of the N-terminal regulatory domain activates the methylesterase activity.

It localises to the cytoplasm. The catalysed reaction is [protein]-L-glutamate 5-O-methyl ester + H2O = L-glutamyl-[protein] + methanol + H(+). The enzyme catalyses L-glutaminyl-[protein] + H2O = L-glutamyl-[protein] + NH4(+). Its function is as follows. Involved in chemotaxis. Part of a chemotaxis signal transduction system that modulates chemotaxis in response to various stimuli. Catalyzes the demethylation of specific methylglutamate residues introduced into the chemoreceptors (methyl-accepting chemotaxis proteins or MCP) by CheR. Also mediates the irreversible deamidation of specific glutamine residues to glutamic acid. The sequence is that of Protein-glutamate methylesterase/protein-glutamine glutaminase 1 from Leptospira interrogans serogroup Icterohaemorrhagiae serovar Lai (strain 56601).